Here is a 58-residue protein sequence, read N- to C-terminus: Photosystem II reaction center protein K (58 aa).

Residues 1–21 constitute a propeptide that is removed on maturation; sequence MTVSYSIYLENSLHFGDALLA. Residues 29-49 form a helical membrane-spanning segment; the sequence is IFDPIVDVMPVIPVFFLLLAF.

This sequence belongs to the PsbK family. PSII is composed of 1 copy each of membrane proteins PsbA, PsbB, PsbC, PsbD, PsbE, PsbF, PsbH, PsbI, PsbJ, PsbK, PsbL, PsbM, PsbT, PsbX, PsbY, PsbZ, Psb30/Ycf12, at least 3 peripheral proteins of the oxygen-evolving complex and a large number of cofactors. It forms dimeric complexes.

It is found in the plastid. Its subcellular location is the chloroplast thylakoid membrane. One of the components of the core complex of photosystem II (PSII). PSII is a light-driven water:plastoquinone oxidoreductase that uses light energy to abstract electrons from H(2)O, generating O(2) and a proton gradient subsequently used for ATP formation. It consists of a core antenna complex that captures photons, and an electron transfer chain that converts photonic excitation into a charge separation. This chain is Photosystem II reaction center protein K, found in Adiantum capillus-veneris (Maidenhair fern).